We begin with the raw amino-acid sequence, 447 residues long: Glutamate--tRNA ligase 2 (447 aa).

A 'HIGH' region motif is present at residues 8-18 (PSPTGYLHVGN). The 'KMSKS' region motif lies at 239–243 (KLSKR). Residue Lys-242 coordinates ATP.

The protein belongs to the class-I aminoacyl-tRNA synthetase family. Glutamate--tRNA ligase type 1 subfamily. Monomer.

It localises to the cytoplasm. The enzyme catalyses tRNA(Glu) + L-glutamate + ATP = L-glutamyl-tRNA(Glu) + AMP + diphosphate. Its function is as follows. Catalyzes the attachment of glutamate to tRNA(Glu) in a two-step reaction: glutamate is first activated by ATP to form Glu-AMP and then transferred to the acceptor end of tRNA(Glu). The chain is Glutamate--tRNA ligase 2 from Granulibacter bethesdensis (strain ATCC BAA-1260 / CGDNIH1).